The sequence spans 344 residues: tRNA N6-adenosine threonylcarbamoyltransferase (344 aa).

His-111 and His-115 together coordinate Fe cation. Residues 133–137 (VVSGG), Asp-166, Gly-179, Asp-183, and Asn-270 each bind substrate. Asp-298 provides a ligand contact to Fe cation.

It belongs to the KAE1 / TsaD family. Fe(2+) is required as a cofactor.

It localises to the cytoplasm. The enzyme catalyses L-threonylcarbamoyladenylate + adenosine(37) in tRNA = N(6)-L-threonylcarbamoyladenosine(37) in tRNA + AMP + H(+). Its function is as follows. Required for the formation of a threonylcarbamoyl group on adenosine at position 37 (t(6)A37) in tRNAs that read codons beginning with adenine. Is involved in the transfer of the threonylcarbamoyl moiety of threonylcarbamoyl-AMP (TC-AMP) to the N6 group of A37, together with TsaE and TsaB. TsaD likely plays a direct catalytic role in this reaction. The polypeptide is tRNA N6-adenosine threonylcarbamoyltransferase (Persephonella marina (strain DSM 14350 / EX-H1)).